Here is a 150-residue protein sequence, read N- to C-terminus: Macrodomain Ter protein (150 aa).

The protein belongs to the MatP family. As to quaternary structure, homodimer.

It localises to the cytoplasm. Functionally, required for spatial organization of the terminus region of the chromosome (Ter macrodomain) during the cell cycle. Prevents early segregation of duplicated Ter macrodomains during cell division. Binds specifically to matS, which is a 13 bp signature motif repeated within the Ter macrodomain. This chain is Macrodomain Ter protein, found in Escherichia coli (strain SMS-3-5 / SECEC).